Consider the following 118-residue polypeptide: Large ribosomal subunit protein bL19 (118 aa).

This sequence belongs to the bacterial ribosomal protein bL19 family.

This protein is located at the 30S-50S ribosomal subunit interface and may play a role in the structure and function of the aminoacyl-tRNA binding site. The polypeptide is Large ribosomal subunit protein bL19 (Geobacter metallireducens (strain ATCC 53774 / DSM 7210 / GS-15)).